We begin with the raw amino-acid sequence, 231 residues long: Ribosomal RNA large subunit methyltransferase E (231 aa).

Residues Gly-76, Trp-78, Asp-99, Asp-115, and Asp-139 each coordinate S-adenosyl-L-methionine. The Proton acceptor role is filled by Lys-179.

The protein belongs to the class I-like SAM-binding methyltransferase superfamily. RNA methyltransferase RlmE family.

Its subcellular location is the cytoplasm. It carries out the reaction uridine(2552) in 23S rRNA + S-adenosyl-L-methionine = 2'-O-methyluridine(2552) in 23S rRNA + S-adenosyl-L-homocysteine + H(+). Functionally, specifically methylates the uridine in position 2552 of 23S rRNA at the 2'-O position of the ribose in the fully assembled 50S ribosomal subunit. This Bradyrhizobium sp. (strain BTAi1 / ATCC BAA-1182) protein is Ribosomal RNA large subunit methyltransferase E.